Consider the following 364-residue polypeptide: Histidinol-phosphate aminotransferase (364 aa).

N6-(pyridoxal phosphate)lysine is present on K226.

The protein belongs to the class-II pyridoxal-phosphate-dependent aminotransferase family. Histidinol-phosphate aminotransferase subfamily. In terms of assembly, homodimer. It depends on pyridoxal 5'-phosphate as a cofactor.

The catalysed reaction is L-histidinol phosphate + 2-oxoglutarate = 3-(imidazol-4-yl)-2-oxopropyl phosphate + L-glutamate. It participates in amino-acid biosynthesis; L-histidine biosynthesis; L-histidine from 5-phospho-alpha-D-ribose 1-diphosphate: step 7/9. This is Histidinol-phosphate aminotransferase from Campylobacter jejuni subsp. doylei (strain ATCC BAA-1458 / RM4099 / 269.97).